Here is a 192-residue protein sequence, read N- to C-terminus: Lipid A acyltransferase PagP (192 aa).

Residues 1-26 (MTVVNKSFLTILIFFCQILFPLNASA) form the signal peptide. Active-site residues include H64, D107, and S108.

This sequence belongs to the lipid A palmitoyltransferase family. In terms of assembly, homodimer.

The protein localises to the cell outer membrane. It catalyses the reaction a lipid A + a 1,2-diacyl-sn-glycero-3-phosphocholine = a hepta-acyl lipid A + a 2-acyl-sn-glycero-3-phosphocholine. The enzyme catalyses a lipid IVA + a 1,2-diacyl-sn-glycero-3-phosphocholine = a lipid IVB + a 2-acyl-sn-glycero-3-phosphocholine. The catalysed reaction is a lipid IIA + a 1,2-diacyl-sn-glycero-3-phosphocholine = a lipid IIB + a 2-acyl-sn-glycero-3-phosphocholine. In terms of biological role, transfers a fatty acid residue from the sn-1 position of a phospholipid to the N-linked hydroxyfatty acid chain on the proximal unit of lipid A or its precursors. This Cronobacter sakazakii (strain ATCC BAA-894) (Enterobacter sakazakii) protein is Lipid A acyltransferase PagP.